We begin with the raw amino-acid sequence, 571 residues long: Urease subunit alpha (571 aa).

In terms of domain architecture, Urease spans 131-571; that stretch reads GGIDAHIHFI…LPMAQRYFLF (441 aa). Residues His-136, His-138, and Lys-219 each coordinate Ni(2+). N6-carboxylysine is present on Lys-219. A substrate-binding site is contributed by His-221. Ni(2+) contacts are provided by His-248 and His-274. His-322 serves as the catalytic Proton donor. Asp-362 serves as a coordination point for Ni(2+).

The protein belongs to the metallo-dependent hydrolases superfamily. Urease alpha subunit family. Heterotrimer of UreA (gamma), UreB (beta) and UreC (alpha) subunits. Three heterotrimers associate to form the active enzyme. The cofactor is Ni cation. In terms of processing, carboxylation allows a single lysine to coordinate two nickel ions.

Its subcellular location is the cytoplasm. It catalyses the reaction urea + 2 H2O + H(+) = hydrogencarbonate + 2 NH4(+). It participates in nitrogen metabolism; urea degradation; CO(2) and NH(3) from urea (urease route): step 1/1. This chain is Urease subunit alpha, found in Nostoc punctiforme (strain ATCC 29133 / PCC 73102).